Here is a 273-residue protein sequence, read N- to C-terminus: 3-methyl-2-oxobutanoate hydroxymethyltransferase (273 aa).

D53 and D92 together coordinate Mg(2+). 3-methyl-2-oxobutanoate contacts are provided by residues 53 to 54 (DS), D92, and K122. Mg(2+) is bound at residue E124. The active-site Proton acceptor is E191.

It belongs to the PanB family. Homodecamer; pentamer of dimers. It depends on Mg(2+) as a cofactor.

The protein localises to the cytoplasm. The enzyme catalyses 3-methyl-2-oxobutanoate + (6R)-5,10-methylene-5,6,7,8-tetrahydrofolate + H2O = 2-dehydropantoate + (6S)-5,6,7,8-tetrahydrofolate. It functions in the pathway cofactor biosynthesis; (R)-pantothenate biosynthesis; (R)-pantoate from 3-methyl-2-oxobutanoate: step 1/2. In terms of biological role, catalyzes the reversible reaction in which hydroxymethyl group from 5,10-methylenetetrahydrofolate is transferred onto alpha-ketoisovalerate to form ketopantoate. The polypeptide is 3-methyl-2-oxobutanoate hydroxymethyltransferase (Parabacteroides distasonis (strain ATCC 8503 / DSM 20701 / CIP 104284 / JCM 5825 / NCTC 11152)).